Reading from the N-terminus, the 266-residue chain is rRNA adenine N-6-methyltransferase (266 aa).

The S-adenosyl-L-methionine site is built by histidine 14, threonine 16, glycine 41, glutamate 62, aspartate 87, and asparagine 103.

The protein belongs to the class I-like SAM-binding methyltransferase superfamily. rRNA adenine N(6)-methyltransferase family.

In terms of biological role, involved in erythromycin resistance. The protein is rRNA adenine N-6-methyltransferase (ermFU) of Bacteroides fragilis.